Here is a 1360-residue protein sequence, read N- to C-terminus: S-layer protein A (1360 aa).

The N-terminal stretch at 1–24 (MNKSAIRYLSLLLVFLMGGSFLAG) is a signal peptide.

Belongs to the Sulfolobales SlaA family. In terms of assembly, the mushroom-shaped unit cells of the Sulfolobales' S-layers may consist of three SlaB subunits and six SlaA subunits.

The protein localises to the secreted. Its subcellular location is the cell wall. It localises to the S-layer. Its function is as follows. S-layer large protein. May form the highly ordered outer sheath. In Metallosphaera sedula (strain ATCC 51363 / DSM 5348 / JCM 9185 / NBRC 15509 / TH2), this protein is S-layer protein A.